Consider the following 101-residue polypeptide: Small ribosomal subunit protein uS14 (101 aa).

The segment at 51-70 is disordered; that stretch reads LPRDSSPSRQRNRCSQTGRP. Residues 52–68 show a composition bias toward polar residues; it reads PRDSSPSRQRNRCSQTG.

This sequence belongs to the universal ribosomal protein uS14 family. In terms of assembly, part of the 30S ribosomal subunit. Contacts proteins S3 and S10.

In terms of biological role, binds 16S rRNA, required for the assembly of 30S particles and may also be responsible for determining the conformation of the 16S rRNA at the A site. The sequence is that of Small ribosomal subunit protein uS14 from Mannheimia succiniciproducens (strain KCTC 0769BP / MBEL55E).